A 201-amino-acid polypeptide reads, in one-letter code: Small ribosomal subunit protein uS4 (201 aa).

Residues 28 to 47 (KKNYPPGQHGNSRKRKTSEY) form a disordered region. Residues 92–155 (GRLDNIVFRL…KSLEVIANSL (64 aa)) enclose the S4 RNA-binding domain.

Belongs to the universal ribosomal protein uS4 family. As to quaternary structure, part of the 30S ribosomal subunit. Contacts protein S5. The interaction surface between S4 and S5 is involved in control of translational fidelity.

Its function is as follows. One of the primary rRNA binding proteins, it binds directly to 16S rRNA where it nucleates assembly of the body of the 30S subunit. Functionally, with S5 and S12 plays an important role in translational accuracy. The polypeptide is Small ribosomal subunit protein uS4 (Bacteroides fragilis (strain YCH46)).